The following is a 264-amino-acid chain: Thiazole synthase (264 aa).

Lysine 100 acts as the Schiff-base intermediate with DXP in catalysis. 1-deoxy-D-xylulose 5-phosphate contacts are provided by residues glycine 161, alanine 187–glycine 188, and asparagine 209–threonine 210.

It belongs to the ThiG family. Homotetramer. Forms heterodimers with either ThiH or ThiS.

It is found in the cytoplasm. It catalyses the reaction [ThiS sulfur-carrier protein]-C-terminal-Gly-aminoethanethioate + 2-iminoacetate + 1-deoxy-D-xylulose 5-phosphate = [ThiS sulfur-carrier protein]-C-terminal Gly-Gly + 2-[(2R,5Z)-2-carboxy-4-methylthiazol-5(2H)-ylidene]ethyl phosphate + 2 H2O + H(+). Its pathway is cofactor biosynthesis; thiamine diphosphate biosynthesis. Its function is as follows. Catalyzes the rearrangement of 1-deoxy-D-xylulose 5-phosphate (DXP) to produce the thiazole phosphate moiety of thiamine. Sulfur is provided by the thiocarboxylate moiety of the carrier protein ThiS. In vitro, sulfur can be provided by H(2)S. The chain is Thiazole synthase from Nitrosospira multiformis (strain ATCC 25196 / NCIMB 11849 / C 71).